Reading from the N-terminus, the 231-residue chain is Eukaryotic translation initiation factor 4E allele Eva1 (231 aa).

A compositionally biased stretch (basic and acidic residues) spans 1-20; the sequence is MAAAEMERTTSFDAAEKLKA. The tract at residues 1-34 is disordered; that stretch reads MAAAEMERTTSFDAAEKLKAADAGGGEVDDELEE. EIF4G-binding regions lie at residues 56 to 59 and 66 to 102; these read HPLE and FDNP…NNIH. Residues 74–79, Lys-106, and 124–125 contribute to the mRNA site; these read RQIDWG and WE. Cys-129 and Cys-167 form a disulfide bridge. An EIF4G-binding region spans residues 150–159; the sequence is YTLLAMIGHQ. MRNA contacts are provided by residues 174-179 and 219-223; these read RVKGEK and KRLDR.

The protein belongs to the eukaryotic initiation factor 4E family. EIF4F is a multi-subunit complex, the composition of which varies with external and internal environmental conditions. It is composed of at least EIF4A, EIF4E and EIF4G. EIF4E is also known to interact with other partners. In higher plants two isoforms of EIF4F have been identified, named isoform EIF4F and isoform EIF(iso)4F. Isoform EIF4F has subunits p220 and p26, whereas isoform EIF(iso)4F has subunits p82 and p28. As to quaternary structure, (Microbial infection) Interacts with potyvirus viral genome-linked protein (VPg); this interaction is possible in susceptible hosts but impaired in resistant plants. Post-translationally, according to the redox status, the Cys-129-Cys-167 disulfide bridge may have a role in regulating protein function by affecting its ability to bind capped mRNA.

The protein localises to the nucleus. It is found in the cytoplasm. Component of the protein complex eIF4F, which is involved in the recognition of the mRNA cap, ATP-dependent unwinding of 5'-terminal secondary structure and recruitment of mRNA to the ribosome. Recognizes and binds the 7-methylguanosine-containing mRNA cap during an early step in the initiation of protein synthesis and facilitates ribosome binding by inducing the unwinding of the mRNAs secondary structures. Key component of recessive resistance to potyviruses. Functionally, (Microbial infection) Susceptibility host factor required for viral infection (e.g. Potato virus Y (PVY)) by recruiting viral RNAs to the host ribosomal complex via an interaction with viral genome-linked protein (VPg). Displayed sequence is the allele Eva1 that confers resistance to potato virus Y (PVY) by failing to interact with the viral VPg protein. This is Eukaryotic translation initiation factor 4E allele Eva1 from Solanum etuberosum (Wild potato).